The chain runs to 160 residues: MQCPSCQNTDSRVLESRAADGGRSVRRRRECLNCEFRFTTYERVETVPITVIKRNGNREIFSRSKLLHGLNRACEKTGLDTSRLESLVEELELRLQQRTGKEVSSTEIGEFVLRDLKQISEVAYIRFASVYRQFRGIDDFVSTLETLNADQEQNHLATVR.

Residues 3-34 (CPSCQNTDSRVLESRAADGGRSVRRRRECLNC) fold into a zinc finger. The ATP-cone domain maps to 49-139 (ITVIKRNGNR…VYRQFRGIDD (91 aa)).

It belongs to the NrdR family. It depends on Zn(2+) as a cofactor.

Functionally, negatively regulates transcription of bacterial ribonucleotide reductase nrd genes and operons by binding to NrdR-boxes. In Synechococcus sp. (strain CC9605), this protein is Transcriptional repressor NrdR.